A 452-amino-acid polypeptide reads, in one-letter code: L-seryl-tRNA(Sec) selenium transferase (452 aa).

At K285 the chain carries N6-(pyridoxal phosphate)lysine.

This sequence belongs to the SelA family. Pyridoxal 5'-phosphate serves as cofactor.

The protein resides in the cytoplasm. It catalyses the reaction L-seryl-tRNA(Sec) + selenophosphate + H(+) = L-selenocysteinyl-tRNA(Sec) + phosphate. It participates in aminoacyl-tRNA biosynthesis; selenocysteinyl-tRNA(Sec) biosynthesis; selenocysteinyl-tRNA(Sec) from L-seryl-tRNA(Sec) (bacterial route): step 1/1. Functionally, converts seryl-tRNA(Sec) to selenocysteinyl-tRNA(Sec) required for selenoprotein biosynthesis. The protein is L-seryl-tRNA(Sec) selenium transferase of Aquifex aeolicus (strain VF5).